Consider the following 262-residue polypeptide: Merozoite surface protein 2 (262 aa).

An N-terminal signal peptide occupies residues 1 to 20 (MKVIKTLSIINFFIFVTFNI). Residues N22 and N36 are each glycosylated (N-linked (GlcNAc...) asparagine). Residues 44-188 (AESKPPTGTG…EQTESPELQS (145 aa)) are polymorphic region. Residues 44–223 (AESKPPTGTG…DSQKECTDGN (180 aa)) are disordered. The segment covering 51 to 66 (GTGGSGSAGSGAGASA) has biased composition (gly residues). Residues 67-111 (GNGANPGADAERSPSTPATPATPATTTTTTTTNDAEASTSTSSEN) show a composition bias toward low complexity. The span at 112–127 (PNHKNAETNPKGKGEV) shows a compositional bias: basic and acidic residues. 2 stretches are compositionally biased toward polar residues: residues 129–155 (KPNQ…NVPP) and 162–190 (KSPT…QSAP). A glycan (N-linked (GlcNAc...) asparagine) is linked at N139. The N-linked (GlcNAc...) asparagine glycan is linked to N211. An intrachain disulfide couples C219 to C227. N235 and N236 each carry an N-linked (GlcNAc...) asparagine glycan. The GPI-anchor amidated asparagine moiety is linked to residue N236. Positions 237-262 (SSNIASINKFVVLISATLVLSFAIFI) are cleaved as a propeptide — removed in mature form.

It localises to the cell membrane. May play a role in the merozoite attachment to the erythrocyte. The polypeptide is Merozoite surface protein 2 (Plasmodium falciparum (isolate Camp / Malaysia)).